The chain runs to 83 residues: Cardiotoxin 7'' (83 aa).

An N-terminal signal peptide occupies residues 1–21; that stretch reads MKTLLLTLVVVTIVCLDLGYT. 4 disulfide bridges follow: Cys-24-Cys-43, Cys-36-Cys-61, Cys-65-Cys-76, and Cys-77-Cys-82.

Belongs to the three-finger toxin family. Short-chain subfamily. Orphan group XV sub-subfamily. Expressed by the venom gland.

It is found in the secreted. The protein resides in the target cell membrane. Functionally, has low cytotoxic activity. This chain is Cardiotoxin 7'', found in Naja atra (Chinese cobra).